A 1446-amino-acid polypeptide reads, in one-letter code: Sister chromatid cohesion protein PDS5 homolog B (1446 aa).

One copy of the HEAT repeat lies at 383-419 (LLVNDHLLNFVRERTLDKRWRVRKEAMMGLAQIYKKY). N6-acetyllysine is present on K1136. The segment covering 1137–1155 (PLSSAGKQSQTKSSRMETV) has biased composition (polar residues). Residues 1137–1446 (PLSSAGKQSQ…RRRSSKRERR (310 aa)) form a disordered region. 6 positions are modified to phosphoserine: S1140, S1162, S1166, S1176, S1182, and S1191. The span at 1156-1167 (SNASSSSNPSSP) shows a compositional bias: low complexity. A compositionally biased stretch (basic and acidic residues) spans 1172 to 1184 (GRLDSSEMDHSEN). Basic and acidic residues-rich tracts occupy residues 1196–1212 (KKSD…LEKP) and 1223–1241 (PEEK…EQKP). Over residues 1243–1252 (GSQRGRKRGR) the composition is skewed to basic residues. Positions 1247-1259 (GRKRGRTASDSDE) form a DNA-binding region, a.T hook 1. A Phosphothreonine modification is found at T1253. 2 positions are modified to phosphoserine: S1255 and S1257. Over residues 1263–1272 (PEEKRHKEEL) the composition is skewed to basic and acidic residues. S1281 is subject to Phosphoserine. The segment at residues 1285–1297 (KGKRGRPPKPLGG) is a DNA-binding region (a.T hook 2). 2 stretches are compositionally biased toward basic residues: residues 1308-1317 (TSKKGNKKKL) and 1339-1351 (SKSK…KRAQ). Polar residues predominate over residues 1353-1370 (RAESPETSAVESTQSTPQ). 2 positions are modified to phosphoserine: S1356 and S1364. Position 1365 is a phosphothreonine (T1365). The residue at position 1367 (S1367) is a Phosphoserine. T1368 is subject to Phosphothreonine. The a.T hook 3 DNA-binding region spans 1370–1382 (QKGRGRPSKAPSP). Phosphoserine is present on residues S1381, S1415, and S1418. The segment covering 1421-1431 (TTQEGAEEEDI) has biased composition (acidic residues). Over residues 1436-1446 (VRRRSSKRERR) the composition is skewed to basic residues.

It belongs to the PDS5 family. As to quaternary structure, interacts with the cohesin complex. Interacts with RAD21; the interaction is direct. Interacts with WAPL (via FGF motifs) or CDCA5 (via the FGF motif); the interaction is direct, cohesin-dependent and competitive. Expressed in prostate.

It localises to the nucleus. Regulator of sister chromatid cohesion in mitosis which may stabilize cohesin complex association with chromatin. May couple sister chromatid cohesion during mitosis to DNA replication. Cohesion ensures that chromosome partitioning is accurate in both meiotic and mitotic cells and plays an important role in DNA repair. Plays a role in androgen-induced proliferative arrest in prostate cells. The protein is Sister chromatid cohesion protein PDS5 homolog B (Pds5b) of Mus musculus (Mouse).